We begin with the raw amino-acid sequence, 129 residues long: Small ribosomal subunit protein uS11 (129 aa).

Belongs to the universal ribosomal protein uS11 family. As to quaternary structure, part of the 30S ribosomal subunit. Interacts with proteins S7 and S18. Binds to IF-3.

In terms of biological role, located on the platform of the 30S subunit, it bridges several disparate RNA helices of the 16S rRNA. Forms part of the Shine-Dalgarno cleft in the 70S ribosome. This chain is Small ribosomal subunit protein uS11, found in Desulforamulus reducens (strain ATCC BAA-1160 / DSM 100696 / MI-1) (Desulfotomaculum reducens).